Here is a 726-residue protein sequence, read N- to C-terminus: MTTEGSCPFHHTAAIGGLKTNEEWWPNRLNLKILRQNSPLSNPMGAGFNYAKEFCSLDLSALKEDLRRLMTDSQQWWPADFGHYGPLFIRMAWHSAGTYRVHDGRGGAGSGQQRFAPLNSWPDNVLLDKARRLLWPIKQKYGRKISWADLIILAGNVALESMGLKTFGFGGGRVDSWEPDESVYWGVEQKWLEDKRYSGKRDLEQPLAAVQMGLIYVNPEGPNGNPDPVAAAVDIRETFTRMGMNDAETVALIAGGHTFGKAHGAGPASFVGPEPEAAGIAEQGLGWRSSYRSGKGADAIGSGLEVIWTRTPTRWNNDYFQFLFEYEWEPTKSPAGAWQWVAKDAPEIVPDPFDPAKKRKPTMLTTDLSLRFDPVYEKIARAYYEQPDLFADAFARAWFKLTHRDMGPRSRYLGPEVPKEDLLWQDPIPPVDHPLIETDDMNSLKAKILESGLTVRELVFTAWSSASTFRGSDKRGGANGARIRLSPQKDWPANEPTQLARVLAVLEQIQKEFNARSPKKVSMADLIVLGGCAGVEQAARNGGRSVVVPFIPGRSDALEEQTDVESFAFLEPWADGFRNFYKKGCSVPQEALLVDKAQLLTLTAPEMTVLVGGMRVLDANVGRSRHGVFTDRPGALTNDFFVNLLDMDTEWKPVDEREELFEGRDRKTGTLLWTATRVDLIFGSNSELRAISEVYGAADAQDKFVKDFISAWNKVMNLDRFDLAPA.

The segment at residues 93-216 (WHSAGTYRVH…LAAVQMGLIY (124 aa)) is a cross-link (tryptophyl-tyrosyl-methioninium (Trp-Tyr) (with M-242)). The Proton acceptor role is filled by histidine 94. The segment at residues 216-242 (YVNPEGPNGNPDPVAAAVDIRETFTRM) is a cross-link (tryptophyl-tyrosyl-methioninium (Tyr-Met) (with W-93)). Histidine 257 provides a ligand contact to heme b. The segment at 471-490 (GSDKRGGANGARIRLSPQKD) is disordered.

Belongs to the peroxidase family. Peroxidase/catalase subfamily. In terms of assembly, homodimer or homotetramer. Heme b is required as a cofactor. In terms of processing, formation of the three residue Trp-Tyr-Met cross-link is important for the catalase, but not the peroxidase activity of the enzyme.

The enzyme catalyses H2O2 + AH2 = A + 2 H2O. It carries out the reaction 2 H2O2 = O2 + 2 H2O. Functionally, bifunctional enzyme with both catalase and broad-spectrum peroxidase activity. The chain is Catalase-peroxidase from Methylacidiphilum infernorum (isolate V4) (Methylokorus infernorum (strain V4)).